Reading from the N-terminus, the 219-residue chain is MNTDALKKMAAEAALRYIQPGMVVGVGTGSTTNFFIEALGAAKIHVDGYVASSIATENRLKAQGLNVLELNATGDIPVYIDGADEADPHFRLIKGGGGALTREKIVASAARLFVCIADDSKDRPMLGKFPLPVEVIPFARSFVARQLVKIGGSPTLRSGITTDNGNVILDVTGLDFSDPLRMEETINAIPGVLDNGIFAHRRADVMLFGSAGGVIERKA.

Substrate is bound by residues 28 to 31 (TGST), 81 to 84 (DGAD), and 94 to 97 (KGGG). Glu-103 functions as the Proton acceptor in the catalytic mechanism. Lys-121 contributes to the substrate binding site.

It belongs to the ribose 5-phosphate isomerase family. In terms of assembly, homodimer.

It carries out the reaction aldehydo-D-ribose 5-phosphate = D-ribulose 5-phosphate. Its pathway is carbohydrate degradation; pentose phosphate pathway; D-ribose 5-phosphate from D-ribulose 5-phosphate (non-oxidative stage): step 1/1. Its function is as follows. Catalyzes the reversible conversion of ribose-5-phosphate to ribulose 5-phosphate. In Acidithiobacillus ferrooxidans (strain ATCC 23270 / DSM 14882 / CIP 104768 / NCIMB 8455) (Ferrobacillus ferrooxidans (strain ATCC 23270)), this protein is Ribose-5-phosphate isomerase A.